Here is a 127-residue protein sequence, read N- to C-terminus: Glycine cleavage system H protein (127 aa).

Positions 24–105 (TALVGITDFA…YNDGWLVKMK (82 aa)) constitute a Lipoyl-binding domain. The residue at position 65 (Lys-65) is an N6-lipoyllysine.

The protein belongs to the GcvH family. The glycine cleavage system is composed of four proteins: P, T, L and H. Requires (R)-lipoate as cofactor.

Its function is as follows. The glycine cleavage system catalyzes the degradation of glycine. The H protein shuttles the methylamine group of glycine from the P protein to the T protein. In Pelodictyon phaeoclathratiforme (strain DSM 5477 / BU-1), this protein is Glycine cleavage system H protein.